Here is a 532-residue protein sequence, read N- to C-terminus: Probable calcium-binding mitochondrial carrier CBG00135 (532 aa).

EF-hand domains lie at 70 to 105 (EKEKKIREMYDRLDADNDGSIDIRDLTQALSSQTPH), 107 to 136 (PATMAPKLLAKMKREDSDRVTYADFTNYVI), 137 to 172 (AHEARLAEVFDQIDSNRDGEVDVSEIKSYCKEMGVN), and 173 to 208 (LDDHKALSIVKKMDQSGSSSVNLNEFQDFMLLYPST). 5 residues coordinate Ca(2+): Asp-83, Asp-85, Asp-87, Ser-89, and Asp-94. Positions 150, 152, 154, 156, and 161 each coordinate Ca(2+). Solcar repeat units lie at residues 243–329 (GVWW…IKRW), 339–425 (LTTY…LKSC), and 436–526 (PGVL…VRKQ). 6 consecutive transmembrane segments (helical) span residues 249–266 (LVAGGVAGAMSRTCTAPF), 304–323 (GNGINVIKIAPESAMKFMSY), 349–362 (SSAGAISQTAIYPM), 400–419 (GYLPNLLGIIPYAGIDLTVY), 442–459 (LACGTCSSTCGQLASYPL), and 501–518 (GITPNFMKVIPAVSISYV).

Belongs to the mitochondrial carrier (TC 2.A.29) family.

It localises to the mitochondrion inner membrane. Calcium-dependent mitochondrial solute carrier. The sequence is that of Probable calcium-binding mitochondrial carrier CBG00135 from Caenorhabditis briggsae.